The primary structure comprises 253 residues: Isoprenyl transferase (253 aa).

Residue Asp-30 is part of the active site. Asp-30 contributes to the Mg(2+) binding site. Residues Gly-31–Arg-34, Trp-35, His-51, and Ser-79–Glu-81 each bind substrate. Asn-82 functions as the Proton acceptor in the catalytic mechanism. Residues Phe-83, Arg-85, Arg-202, and Arg-208–Ser-210 each bind substrate. Glu-221 provides a ligand contact to Mg(2+).

The protein belongs to the UPP synthase family. In terms of assembly, homodimer. Requires Mg(2+) as cofactor.

In terms of biological role, catalyzes the condensation of isopentenyl diphosphate (IPP) with allylic pyrophosphates generating different type of terpenoids. The protein is Isoprenyl transferase of Chlamydia muridarum (strain MoPn / Nigg).